Here is a 965-residue protein sequence, read N- to C-terminus: Serine/threonine-protein kinase tousled-like 1 (965 aa).

Disordered regions lie at residues 1–22 (MSMLSMDGIVAGGGSSSGGGER), 35–72 (PQNKALPTVQSSGSSSNHAPIVGESPLGTVSSTMATGD), 95–120 (QNSSHPSTSVMMQQVPPQNGGATRSS), 172–292 (NHQQ…KQER), 320–402 (QNQG…QSGR), and 538–576 (RKPLGIGKEPKRPQAVNSQNDSNGMQPSTSSNTNGDDAI). The span at 10–21 (VAGGGSSSGGGE) shows a compositional bias: gly residues. Over residues 42-52 (TVQSSGSSSNH) the composition is skewed to polar residues. The span at 172–231 (NHQQQMQQMHYHQQQQQYQQQQAQHHQMYAPQIQQQQQQPQQQSQQQSAQQPQQSSAALQ) shows a compositional bias: low complexity. Composition is skewed to polar residues over residues 233–244 (VNESSNLSSAGS) and 320–341 (QNQGSPKRQPAVQQNGSNSYDS). Residues 342 to 355 (QQQQPQMNQHEMQN) are compositionally biased toward low complexity. The segment covering 365–381 (LGVNNRGTPTPTQQQHY) has biased composition (polar residues). Low complexity predominate over residues 382–401 (SSDSNSNSNQSPPGQGNQSG). Positions 552–572 (AVNSQNDSNGMQPSTSSNTNG) are enriched in polar residues. Ser-634 is modified (phosphoserine). Residues 651-928 (YLMLNLLGKG…VFELAKHELF (278 aa)) form the Protein kinase domain. ATP contacts are provided by residues 657-665 (LGKGGFSEV) and Lys-680. Residue Asp-781 is the Proton acceptor of the active site.

It belongs to the protein kinase superfamily. Ser/Thr protein kinase family. As to quaternary structure, interacts with air-2. In terms of processing, autophosphorylates in vitro. Phosphorylation on Ser-634 by air-2 enhances catalytic activity.

It is found in the nucleus. The catalysed reaction is L-seryl-[protein] + ATP = O-phospho-L-seryl-[protein] + ADP + H(+). It carries out the reaction L-threonyl-[protein] + ATP = O-phospho-L-threonyl-[protein] + ADP + H(+). Functionally, essential for appropriate transcription during embryonic development. May act during transcription elongation to activate the RNA polymerase II large subunit (ama-1) by phosphorylating the Ser-2 residues of the C-terminal domain 7-residue repeats. Does not phosphorylate histone H3. This is Serine/threonine-protein kinase tousled-like 1 (tlk-1) from Caenorhabditis elegans.